Here is a 546-residue protein sequence, read N- to C-terminus: Chaperonin GroEL (546 aa).

ATP-binding positions include Thr-30–Pro-33, Lys-51, Asp-87–Thr-91, Gly-415, Asn-479–Ala-481, and Asp-495. The disordered stretch occupies residues Lys-526–Met-546. The segment covering Ala-533–Met-546 has biased composition (gly residues).

This sequence belongs to the chaperonin (HSP60) family. In terms of assembly, forms a cylinder of 14 subunits composed of two heptameric rings stacked back-to-back. Interacts with the co-chaperonin GroES.

The protein localises to the cytoplasm. It catalyses the reaction ATP + H2O + a folded polypeptide = ADP + phosphate + an unfolded polypeptide.. In terms of biological role, together with its co-chaperonin GroES, plays an essential role in assisting protein folding. The GroEL-GroES system forms a nano-cage that allows encapsulation of the non-native substrate proteins and provides a physical environment optimized to promote and accelerate protein folding. This Thioalkalivibrio sulfidiphilus (strain HL-EbGR7) protein is Chaperonin GroEL.